Consider the following 1320-residue polypeptide: Poly [ADP-ribose] polymerase tankyrase-1 (1320 aa).

A compositionally biased stretch (basic residues) spans 1–15 (MAASRRSQHHHHHHQ). Disordered regions lie at residues 1–88 (MAAS…DGAV) and 111–152 (AGGG…AAGV). A compositionally biased stretch (pro residues) spans 25–46 (SAPPPPPPPPLSPGLAPGPTPA). A compositionally biased stretch (basic and acidic residues) spans 69–82 (DGSRDPPDRPRSPD). Residues 120–152 (NSASSASSPTSSSSSSPSSPGSSLAESPEAAGV) show a composition bias toward low complexity. ANK repeat units lie at residues 174–202 (GALR…NVNA), 208–237 (RKSS…NVHA), 241–270 (GGLI…DPNA), 274–303 (WNYT…DPNI), 361–390 (RKST…DVHA), 394–423 (GGLV…CVNA), 427–456 (WQFT…DPTL), 514–546 (SHET…NVNE), 550–579 (DFMT…KMNA), 583–612 (LGQT…DPSI), 676–705 (RHST…DVHA), 709–738 (GGLV…SVNV), 742–771 (WKFT…DPTK), 775–803 (DGNT…LLDA), 829–858 (RNST…DVNA), 862–891 (GGLI…CVNA), 895–924 (WAFT…DPTM), and 928–957 (EGQT…LPTC). Residues 1019 to 1082 (GLDMNISQFL…IKGVERLLGG (64 aa)) enclose the SAM domain. The 206-residue stretch at 1105 to 1310 (APEDKEYQSV…YQIMKPEAPS (206 aa)) folds into the PARP catalytic domain. Zn(2+)-binding residues include C1227, H1230, C1235, and C1238.

This sequence belongs to the ARTD/PARP family. As to quaternary structure, oligomerizes and associates with TNKS2. Interacts with the cytoplasmic domain of LNPEP/Otase in SLC2A4/GLUT4-vesicles. Binds to the N-terminus of telomeric TERF1 via the ANK repeats. Found in a complex with POT1; TERF1 and TINF2. Interacts with AXIN1. Interacts with AXIN2. Interacts with BLZF1 and CASC3. Interacts with NUMA1. Post-translationally, phosphorylated on serine residues by MAPK kinases upon insulin stimulation. Phosphorylated during mitosis. In terms of processing, ubiquitinated by RNF146 when auto-poly-ADP-ribosylated, leading to its degradation. ADP-ribosylated (-auto). Poly-ADP-ribosylated protein is recognized by RNF146, followed by ubiquitination.

The protein resides in the cytoplasm. The protein localises to the golgi apparatus membrane. Its subcellular location is the cytoskeleton. It is found in the microtubule organizing center. It localises to the centrosome. The protein resides in the nucleus. The protein localises to the nuclear pore complex. Its subcellular location is the chromosome. It is found in the telomere. It localises to the spindle pole. The enzyme catalyses NAD(+) + (ADP-D-ribosyl)n-acceptor = nicotinamide + (ADP-D-ribosyl)n+1-acceptor + H(+).. It carries out the reaction L-aspartyl-[protein] + NAD(+) = 4-O-(ADP-D-ribosyl)-L-aspartyl-[protein] + nicotinamide. It catalyses the reaction L-glutamyl-[protein] + NAD(+) = 5-O-(ADP-D-ribosyl)-L-glutamyl-[protein] + nicotinamide. Its function is as follows. Poly-ADP-ribosyltransferase involved in various processes such as Wnt signaling pathway, telomere length and vesicle trafficking. Acts as an activator of the Wnt signaling pathway by mediating poly-ADP-ribosylation (PARsylation) of AXIN1 and AXIN2, 2 key components of the beta-catenin destruction complex: poly-ADP-ribosylated target proteins are recognized by RNF146, which mediates their ubiquitination and subsequent degradation. Also mediates PARsylation of BLZF1 and CASC3, followed by recruitment of RNF146 and subsequent ubiquitination. Mediates PARsylation of TERF1, thereby contributing to the regulation of telomere length. Involved in centrosome maturation during prometaphase by mediating PARsylation of HEPACAM2/MIKI. May also regulate vesicle trafficking and modulate the subcellular distribution of SLC2A4/GLUT4-vesicles. May be involved in spindle pole assembly through PARsylation of NUMA1. Stimulates 26S proteasome activity. This chain is Poly [ADP-ribose] polymerase tankyrase-1 (Tnks), found in Mus musculus (Mouse).